The sequence spans 415 residues: MFMREIELKGHIIDSFILAKVFDRTLELGGDYKVLEFDIGKKKIDTSYAKLLISGDTQQHLDQILEELQNVGANIPEIENANLKPALKDSVLPDGFYSTTNHPTHVKVNDEWIEVANPKMDAVIVVYPEEKRAETKVIRKVKKGDFVLIGHNGIRVMPPEKSREAGQLFEFMNSEVSSEKPKEAIIKRIAKEMHEIREEYKKTGTGGIAIVGGPAIIHTGGGPALAKMVELGYIQAILAGNALATHDIESALYGTSLGVNIKTAKPVTGGHKHHIYAINAINDAGNIKNAVESGVLKEGIMYQCIKNNIPYVLAGSIRDDGPIPDVITDSMVAQDKMRTTVMDKKMVIMLSTLLHSVATGNLMPSYIKTVCVDIQPSTVTKLMDRGTSQAIGVVTDVGVFLVLLLKELERLELQE.

NAD(+)-binding residues include Asn241, Ala242, Asp320, Thr352, Leu354, His355, Asp373, Asp396, and Val397.

This sequence belongs to the AgrE/ArgZ ornithine cyclodeaminase family. NAD(+) is required as a cofactor.

The enzyme catalyses L-ornithine = L-proline + NH4(+). Functionally, catalyzes the conversion of ornithine to proline, with the release of ammonia. The sequence is that of Ornithine cyclodeaminase from Methanococcus maripaludis (strain DSM 14266 / JCM 13030 / NBRC 101832 / S2 / LL).